Consider the following 1148-residue polypeptide: Phospholipid-transporting ATPase IB (1148 aa).

Residues 1-54 (MSRATSVGDQLDVPARTIYLNQPHLNKFCDNQISTAKYSVVTFLPRFLYEQIRR) lie on the Cytoplasmic side of the membrane. Thr5 bears the Phosphothreonine mark. The helical transmembrane segment at 55-75 (AANAFFLFIALLQQIPDVSPT) threads the bilayer. At 76–79 (GRYT) the chain is on the exoplasmic loop side. Residues 80 to 100 (TLVPLIIILTIAGIKEIVEDF) traverse the membrane as a helical segment. Residues 101–276 (KRHKADNAVN…SNVEKVTNVQ (176 aa)) lie on the Cytoplasmic side of the membrane. Residues 277-297 (ILVLFGILLVMALVSSVGALY) form a helical membrane-spanning segment. Residues 298–324 (WNGSQGGKNWYIKKMDATSDNFGYNLL) lie on the Exoplasmic loop side of the membrane. The chain crosses the membrane as a helical span at residues 325–345 (TFIILYNNLIPISLLVTLEVV). Residues 346–847 (KYTQALFINW…CILYCFYKNV (502 aa)) are Cytoplasmic-facing. Asp388 (4-aspartylphosphate intermediate) is an active-site residue. Residues Asp388, Lys389, Thr390, Glu488, Phe529, Lys552, Arg585, Thr665, Gly666, Asp667, Arg755, and Lys761 each contribute to the ATP site. Mg(2+) is bound at residue Asp388. Residue Thr390 participates in Mg(2+) binding. Asp781 contacts Mg(2+). The ATP site is built by Asn784 and Asp785. Position 785 (Asp785) interacts with Mg(2+). A helical transmembrane segment spans residues 848-868 (VLYIIELWFAFVNGFSGQILF). Residues 869–870 (ER) lie on the Exoplasmic loop side of the membrane. Residues 871 to 891 (WCIGLYNVIFTALPPFTLGIF) form a helical membrane-spanning segment. Residues 892–919 (ERSCSQESMLRFPQLYKITQNAEGFNTK) lie on the Cytoplasmic side of the membrane. The chain crosses the membrane as a helical span at residues 920–940 (VFWGHCINALVHSLILFWFPM). Residues 941-957 (KALEHDTVLANGHATDY) lie on the Exoplasmic loop side of the membrane. The chain crosses the membrane as a helical span at residues 958-978 (LFVGNIVYTYVVVTVCLKAGL). Over 979-988 (ETTAWTKFSH) the chain is Cytoplasmic. A helical transmembrane segment spans residues 989–1009 (LAVWGSMLIWLVFFGIYSTIW). The Exoplasmic loop portion of the chain corresponds to 1010–1023 (PTIPIAPDMKGQAT). A helical membrane pass occupies residues 1024–1044 (MVLSSAHFWLGLFLVPTACLI). Residues 1045 to 1148 (EDVAWRAAKH…DTTKQKSRKK (104 aa)) are Cytoplasmic-facing. The disordered stretch occupies residues 1102–1126 (PPTLFRGSSLQQSMPHGYAFSQEEH).

It belongs to the cation transport ATPase (P-type) (TC 3.A.3) family. Type IV subfamily. As to quaternary structure, component of a P4-ATPase flippase complex which consists of a catalytic alpha subunit and an accessory beta subunit. Interacts with TMEM30A to form a flippase complex. The cofactor is Mg(2+). As to expression, expressed in retinal photoreceptor cells and testis.

The protein localises to the membrane. It localises to the golgi apparatus membrane. Its subcellular location is the endosome membrane. The protein resides in the cell membrane. It is found in the photoreceptor outer segment membrane. The protein localises to the photoreceptor inner segment membrane. The catalysed reaction is ATP + H2O + phospholipidSide 1 = ADP + phosphate + phospholipidSide 2.. It catalyses the reaction a 1,2-diacyl-sn-glycero-3-phospho-L-serine(out) + ATP + H2O = a 1,2-diacyl-sn-glycero-3-phospho-L-serine(in) + ADP + phosphate + H(+). It carries out the reaction a 1,2-diacyl-sn-glycero-3-phosphoethanolamine(in) + ATP + H2O = a 1,2-diacyl-sn-glycero-3-phosphoethanolamine(out) + ADP + phosphate + H(+). Its activity is regulated as follows. ATPase activity is stimulated by phosphatidylserine (PS) and minimally by phosphatidylethanolamine (PE). ATPase activity is inhibited by N-ethylmaleimide (NEM) and vanadate. Flippase activity is inhibited by NEM and 1,2-dioleoyl-sn-glycero-3-phospho-L-serine (DOPS). In terms of biological role, catalytic component of a P4-ATPase flippase complex which catalyzes the hydrolysis of ATP coupled to the transport of aminophospholipids from the outer to the inner leaflet of various membranes and ensures the maintenance of asymmetric distribution of phospholipids. Able to translocate phosphatidylserine, but not phosphatidylcholine. Phospholipid translocation seems also to be implicated in vesicle formation and in uptake of lipid signaling molecules. Reconstituted to liposomes, the ATP8A2:TMEM30A flippase complex predominantly transports phosphatidylserine (PS) and to a lesser extent phosphatidylethanolamine (PE). Phospholipid translocation is not associated with a countertransport of an inorganic ion or other charged substrate from the cytoplasmic side toward the exoplasm in connection with the phosphorylation from ATP. ATP8A2:TMEM30A may be involved in regulation of neurite outgrowth. Proposed to function in the generation and maintenance of phospholipid asymmetry in photoreceptor disk membranes and neuronal axon membranes. May be involved in vesicle trafficking in neuronal cells. Required for normal visual and auditory function; involved in photoreceptor and inner ear spiral ganglion cell survival. The protein is Phospholipid-transporting ATPase IB of Bos taurus (Bovine).